Here is a 123-residue protein sequence, read N- to C-terminus: Periplasmic [Fe] hydrogenase small subunit (123 aa).

Residues 1–34 (MQIASITRRGFLKVACVTTGAALIGIRMTGKAVA) constitute a signal peptide (tat-type signal). A disordered region spans residues 103–123 (TTAGKLPNPRASEFEGPYPYE).

As to quaternary structure, heterodimer of a large and a small subunit. Post-translationally, predicted to be exported by the Tat system. The position of the signal peptide cleavage has been experimentally proven.

The protein localises to the periplasm. The enzyme catalyses H2 + 2 oxidized [2Fe-2S]-[ferredoxin] = 2 reduced [2Fe-2S]-[ferredoxin] + 2 H(+). In terms of biological role, may be involved in hydrogen uptake for the reduction of sulfate to hydrogen sulfide in an electron transport chain. Cytochrome c3 is likely to be the physiological electron carrier for the enzyme. The chain is Periplasmic [Fe] hydrogenase small subunit (hydB) from Nitratidesulfovibrio vulgaris (strain ATCC 29579 / DSM 644 / CCUG 34227 / NCIMB 8303 / VKM B-1760 / Hildenborough) (Desulfovibrio vulgaris).